The sequence spans 283 residues: Phosphatidylglycerol--prolipoprotein diacylglyceryl transferase (283 aa).

Helical transmembrane passes span 17–37 (LAVRWYALSYILGFILFTFLG), 56–76 (FLTWGILGVILGGRLGYVLFY), and 88–108 (IFKVWEGGMSFHGGFLGVVIA). Arg-139 contributes to the a 1,2-diacyl-sn-glycero-3-phospho-(1'-sn-glycerol) binding site. The next 2 helical transmembrane spans lie at 222-242 (GQVASLFLGGYGIFRFIAEFA) and 255-275 (GLSMGQWLSVPMIVLGIVGFV).

This sequence belongs to the Lgt family.

It is found in the cell inner membrane. It catalyses the reaction L-cysteinyl-[prolipoprotein] + a 1,2-diacyl-sn-glycero-3-phospho-(1'-sn-glycerol) = an S-1,2-diacyl-sn-glyceryl-L-cysteinyl-[prolipoprotein] + sn-glycerol 1-phosphate + H(+). It functions in the pathway protein modification; lipoprotein biosynthesis (diacylglyceryl transfer). In terms of biological role, catalyzes the transfer of the diacylglyceryl group from phosphatidylglycerol to the sulfhydryl group of the N-terminal cysteine of a prolipoprotein, the first step in the formation of mature lipoproteins. This is Phosphatidylglycerol--prolipoprotein diacylglyceryl transferase from Neisseria meningitidis serogroup B (strain ATCC BAA-335 / MC58).